A 73-amino-acid polypeptide reads, in one-letter code: Acyl carrier protein (73 aa).

The Carrier domain maps to 1 to 73 (MAVFEKVQDI…DLVKYVENNK (73 aa)). At S35 the chain carries O-(pantetheine 4'-phosphoryl)serine.

This sequence belongs to the acyl carrier protein (ACP) family. In terms of processing, 4'-phosphopantetheine is transferred from CoA to a specific serine of apo-ACP by AcpS. This modification is essential for activity because fatty acids are bound in thioester linkage to the sulfhydryl of the prosthetic group.

The protein localises to the cytoplasm. It participates in lipid metabolism; fatty acid biosynthesis. Carrier of the growing fatty acid chain in fatty acid biosynthesis. This Lactococcus lactis subsp. lactis (strain IL1403) (Streptococcus lactis) protein is Acyl carrier protein.